A 174-amino-acid chain; its full sequence is Magnetosome protein MamT (174 aa).

Over methionine 1–arginine 9 the chain is Cytoplasmic. A helical transmembrane segment spans residues tryptophan 10–tryptophan 28. The Lumenal segment spans residues aspartate 29–leucine 174. The short motif at valine 87 to methionine 107 is the MCR (magnetochrome) 1 element. Residues cysteine 101, cysteine 104, histidine 105, cysteine 152, cysteine 155, and histidine 156 each coordinate heme. Residues isoleucine 138–isoleucine 158 carry the MCR 2 motif.

Belongs to the magnetosome MamT family. Heme is required as a cofactor.

Its subcellular location is the magnetosome membrane. Functionally, may play a role in magnetite crystal maturation. May transfer electrons to balance the Fe(2+)-Fe(3+) ratio during magnetite formation. The sequence is that of Magnetosome protein MamT from Magnetospirillum gryphiswaldense (strain DSM 6361 / JCM 21280 / NBRC 15271 / MSR-1).